The primary structure comprises 343 residues: S-adenosylmethionine:tRNA ribosyltransferase-isomerase (343 aa).

It belongs to the QueA family. Monomer.

Its subcellular location is the cytoplasm. It carries out the reaction 7-aminomethyl-7-carbaguanosine(34) in tRNA + S-adenosyl-L-methionine = epoxyqueuosine(34) in tRNA + adenine + L-methionine + 2 H(+). It functions in the pathway tRNA modification; tRNA-queuosine biosynthesis. Its function is as follows. Transfers and isomerizes the ribose moiety from AdoMet to the 7-aminomethyl group of 7-deazaguanine (preQ1-tRNA) to give epoxyqueuosine (oQ-tRNA). This is S-adenosylmethionine:tRNA ribosyltransferase-isomerase from Natranaerobius thermophilus (strain ATCC BAA-1301 / DSM 18059 / JW/NM-WN-LF).